Consider the following 239-residue polypeptide: IkB-like protein (239 aa).

4 ANK repeats span residues 48–77 (NKITVFMLICIYGRLDFLRFLFKQESYPGE), 87–116 (DGNSAWHYLAEKNNHLLLEEVLDYFGKNGI), 124–153 (NGVTPIMKAAMRGRTLSVLSLLKYGANPNR), and 158–187 (KGFTTWDWAVFTGHADLVKTLNKGYQKPLF). The short motif at 81–87 (HYRRDKD) is the Nuclear localization signal element. Positions 203 to 214 (KKKPKIIITGCE) match the Nuclear localization signal motif. The PxIxITxC motif; Interaction with host PPP3CA signature appears at 206–213 (PKIIITGC). Residues 228 to 231 (FLCV) carry the FLCV motif motif.

Belongs to the asfivirus A238L family. In terms of assembly, interacts with host PPIA. Interacts with host PPP3CA/Calcineurin. Interacts with host RELA/p65; interaction of the 32 kDa form with host RELA results in the formation of a stable complex with NF-kappa-B. Interacts with host PPP3R1. Interacts with host EP300; this interaction inhibits the association of host EP300 with host RELA, JUN and NFATC2. The protein exists in a 28 kDa and a 32 kDa form, probably due to post-translational modifications which are neither phosphorylation, nor sumoylation.

It localises to the host nucleus. It is found in the host cytoplasm. IkB-like protein that inhibits the binding of NF-kappa-B to DNA, thereby downregulating pro-inflammatory cytokine production. Forms a heterodimer with the NF-kappa-B subunit RELA/p65 and prevents the activation of the NF-kappa-B transcription factor. Inhibits calcineurin function, which is required for the induction of nuclear factor of activated T cells (NFAT)-dependent immune response genes. Prevents the binding of substrates to calcineurin without affecting the phosphatase activity. Does not contain the serine residues that are phosphorylated by host IkB kinase and thus is not degraded following stimulation of the NFkB pathway. In Ornithodoros (relapsing fever ticks), this protein is IkB-like protein (A238L).